The primary structure comprises 416 residues: E3 ubiquitin-protein ligase makorin-2 (416 aa).

2 consecutive C3H1-type zinc fingers follow at residues 2 to 29 and 31 to 58; these read STKQITCRYFMHGVCREGSQCLFSHDLA and SKPSTICKYYQKGYCAYGTRCRYDHTRP. Over residues 113–122 the composition is skewed to basic and acidic residues; it reads NLSGMAERKT. The tract at residues 113–142 is disordered; sequence NLSGMAERKTQPSMVSNPGSCSDPQPSPEM. Residues 123–136 show a composition bias toward polar residues; sequence QPSMVSNPGSCSDP. At Ser139 the chain carries Phosphoserine. The C3H1-type 3 zinc finger occupies 165–192; that stretch reads SNEQQLCPYAAAGECRFGDACVYLHGEV. Residues 193–222 are makorin-type Cys-His; sequence CEICRLQVLHPFDPEQRKAHEKICMLTFEH. The segment at 238–292 adopts an RING-type zinc-finger fold; that stretch reads CSICMEVILEKASASERRFGILSNCNHTYCLSCIRQWRCAKQFENPIIKSCPECR. Residues 321-350 form a C3H1-type 4 zinc finger; the sequence is GMGKKACKYFEQGKGTCPFGSKCLYRHAYP.

Interacts with PDLIM2 (via LIM zinc-binding domain). Interacts with RELA. Expressed in sperm, with significantly reduced expression in sperm of patients with oligoasthenoteratozoospermia (at protein level). Widely expressed with expression in testis, ovary, small intestine, colon, peripheral blood leukocytes, fetal liver, bone marrow, thymus, lymph node and spleen.

Its subcellular location is the cytoplasm. It localises to the nucleus. The enzyme catalyses S-ubiquitinyl-[E2 ubiquitin-conjugating enzyme]-L-cysteine + [acceptor protein]-L-lysine = [E2 ubiquitin-conjugating enzyme]-L-cysteine + N(6)-ubiquitinyl-[acceptor protein]-L-lysine.. The protein operates within protein modification; protein ubiquitination. Functionally, E3 ubiquitin ligase catalyzing the covalent attachment of ubiquitin moieties onto substrate proteins. Promotes the polyubiquitination and proteasome-dependent degradation of RELA/p65, thereby suppressing RELA-mediated NF-kappaB transactivation and negatively regulating inflammatory responses. Plays a role in the regulation of spermiation and in male fertility. This chain is E3 ubiquitin-protein ligase makorin-2 (MKRN2), found in Homo sapiens (Human).